The sequence spans 406 residues: LIM/homeobox protein Lhx1 (406 aa).

2 consecutive LIM zinc-binding domains span residues 4–54 (CAGC…CKND) and 63–117 (CAGC…CKED). 2 disordered regions span residues 128 to 189 (NSLH…TIKA) and 294 to 372 (DFFP…SAEV). Over residues 137–148 (SDPSLSPDSQDP) the composition is skewed to low complexity. Basic and acidic residues predominate over residues 151–167 (DDAKDSESANVSDKEGG). Phosphoserine is present on S162. Positions 180–239 (RRGPRTTIKAKQLETLKAAFAATPKPTRHIREQLAQETGLNMRVIQVWFQNRRSKERRMK) form a DNA-binding region, homeobox. The span at 315 to 327 (PSSGPSGTPLGGL) shows a compositional bias: low complexity. Positions 352–362 (GDSPSPEPSLP) are enriched in pro residues.

In terms of assembly, interacts with LDB1 via the tandem LIM domains.

It is found in the nucleus. Its function is as follows. Potential transcription factor. May play a role in early mesoderm formation and later in lateral mesoderm differentiation and neurogenesis. The polypeptide is LIM/homeobox protein Lhx1 (Lhx1) (Mesocricetus auratus (Golden hamster)).